The sequence spans 439 residues: Enolase 1-1 (439 aa).

Thr-85 bears the Phosphothreonine mark. His-159 and Glu-168 together coordinate substrate. The active-site Proton donor is the Glu-211. Asp-246 contributes to the Mg(2+) binding site. Residues Ser-249 and Ser-250 each carry the phosphoserine modification. The residue at position 253 (Tyr-253) is a Phosphotyrosine. Residues Glu-295 and Asp-320 each contribute to the substrate site. Glu-295 and Asp-320 together coordinate Mg(2+). Residue Lys-345 is the Proton acceptor of the active site. Ser-351 carries the phosphoserine modification. Thr-353 carries the phosphothreonine modification. Ser-355 is modified (phosphoserine). Substrate is bound by residues 372–375 (SHRS) and Lys-396. Phosphoserine is present on Ser-421.

This sequence belongs to the enolase family. Homodimer. Mg(2+) is required as a cofactor.

The protein resides in the cytoplasm. The enzyme catalyses (2R)-2-phosphoglycerate = phosphoenolpyruvate + H2O. The protein operates within carbohydrate degradation; glycolysis; pyruvate from D-glyceraldehyde 3-phosphate: step 4/5. The sequence is that of Enolase 1-1 (eno101) from Schizosaccharomyces pombe (strain 972 / ATCC 24843) (Fission yeast).